The sequence spans 438 residues: MSSNPAATLSDVQPDGFFTRGLADADPAVFGGLTEEIAREKKQIELIASENIVSKAVLEAQGSVFTNKYAEGYPGKRYYQGCHPSDVVEQLAIDRAKQLFNCGFANVQPHSGAQANGAVMLALTQPGDTIMGLSLDAGGHLTHGAKAALSGKWYKAVQYGVRPDDHRIDFDQVEALAREHKPKLIITGGSAYPRHIDFARFRAIADEVGALFMVDMAHFAGLVAGGVHPTPFGHAHVVTTTTHKTLRGPRGGMIMTDDEAIAKKINSAVFPGLQGGPLMHVVAAKAVAFGEALRPEFKAYAAAVVENAKVLAARLKERGADLVSGGTDTHLALVDLRPIGVTGRDADEALERAGITCNKNGVPNDPLPPVKTSGIRVGSPAGTTRGFGPAEFREIADMIADVLDGLAKNGPEGNGQTEAHVKARVEALCDRFPIYPEL.

Residues L135 and 139-141 contribute to the (6S)-5,6,7,8-tetrahydrofolate site; that span reads GHL. K244 is subject to N6-(pyridoxal phosphate)lysine. Residues 361–383 form a disordered region; that stretch reads GVPNDPLPPVKTSGIRVGSPAGT.

It belongs to the SHMT family. As to quaternary structure, homodimer. Pyridoxal 5'-phosphate is required as a cofactor.

The protein resides in the cytoplasm. It catalyses the reaction (6R)-5,10-methylene-5,6,7,8-tetrahydrofolate + glycine + H2O = (6S)-5,6,7,8-tetrahydrofolate + L-serine. It functions in the pathway one-carbon metabolism; tetrahydrofolate interconversion. It participates in amino-acid biosynthesis; glycine biosynthesis; glycine from L-serine: step 1/1. Its function is as follows. Catalyzes the reversible interconversion of serine and glycine with tetrahydrofolate (THF) serving as the one-carbon carrier. This reaction serves as the major source of one-carbon groups required for the biosynthesis of purines, thymidylate, methionine, and other important biomolecules. Also exhibits THF-independent aldolase activity toward beta-hydroxyamino acids, producing glycine and aldehydes, via a retro-aldol mechanism. The sequence is that of Serine hydroxymethyltransferase from Rhizorhabdus wittichii (strain DSM 6014 / CCUG 31198 / JCM 15750 / NBRC 105917 / EY 4224 / RW1) (Sphingomonas wittichii).